Reading from the N-terminus, the 825-residue chain is NT-3 growth factor receptor (825 aa).

A signal peptide spans 1–31 (MDVSLCPAKCSFWRIFLLGSVWLDYVGSVLA). 2 cysteine pairs are disulfide-bonded: cysteine 32-cysteine 38 and cysteine 36-cysteine 45. At 32–429 (CPANCVCSKT…TVTHKPEEDT (398 aa)) the chain is on the extracellular side. Residues asparagine 68, asparagine 72, and asparagine 79 are each glycosylated (N-linked (GlcNAc...) asparagine). 2 LRR repeats span residues 104 to 125 (GLQKLTIRNSGLRSIQPRAFAK) and 128 to 149 (HLRYINLSSNRLTTLSWQLFQT). Asparagine 133 and asparagine 163 each carry an N-linked (GlcNAc...) asparagine glycan. The region spanning 160 to 209 (NFFNCSCDIRWMQLWQEQGEAKLNNQNLYCINADGSQLPLFRMNISQCDL) is the LRRCT domain. 2 disulfide bridges follow: cysteine 164–cysteine 189 and cysteine 166–cysteine 207. N-linked (GlcNAc...) asparagine glycosylation is found at asparagine 203, asparagine 218, asparagine 232, asparagine 259, asparagine 267, asparagine 272, and asparagine 294. Ig-like C2-type domains follow at residues 210–300 (PEIS…VALT) and 309–382 (SLEE…IAKN). Cysteine 231 and cysteine 284 are oxidised to a cystine. An intrachain disulfide couples cysteine 320 to cysteine 362. Residues asparagine 375 and asparagine 388 are each glycosylated (N-linked (GlcNAc...) asparagine). Residues 430–453 (FGVSIAVGLAAFACVLLVVLFIMI) form a helical membrane-spanning segment. Residues 454 to 825 (NKYGRRSKFG…ATPIYLDILG (372 aa)) lie on the Cytoplasmic side of the membrane. Serine 493 is subject to Phosphoserine. Residue tyrosine 516 is modified to Phosphotyrosine; by autocatalysis. Residues 538–825 (IVLKRELGEG…ATPIYLDILG (288 aa)) enclose the Protein kinase domain. Residues 544 to 552 (LGEGAFGKV) and lysine 572 each bind ATP. Aspartate 679 serves as the catalytic Proton acceptor. Residues tyrosine 705, tyrosine 709, and tyrosine 710 each carry the phosphotyrosine; by autocatalysis modification.

It belongs to the protein kinase superfamily. Tyr protein kinase family. Insulin receptor subfamily. In terms of assembly, exists in a dynamic equilibrium between monomeric (low affinity) and dimeric (high affinity) structures. Binds SH2B2. Interacts with SQSTM1 and KIDINS220. Interacts with PTPRS. Interacts with MAPK8IP3/JIP3. Post-translationally, ligand-mediated auto-phosphorylation.

It localises to the membrane. The enzyme catalyses L-tyrosyl-[protein] + ATP = O-phospho-L-tyrosyl-[protein] + ADP + H(+). Its function is as follows. Receptor tyrosine kinase involved in nervous system and probably heart development. Upon binding of its ligand NTF3/neurotrophin-3, NTRK3 autophosphorylates and activates different signaling pathways, including the phosphatidylinositol 3-kinase/AKT and the MAPK pathways, that control cell survival and differentiation. The polypeptide is NT-3 growth factor receptor (NTRK3) (Macaca fascicularis (Crab-eating macaque)).